Consider the following 279-residue polypeptide: Large ribosomal subunit protein uL2 (279 aa).

Disordered regions lie at residues 29–59 (PEKS…GGHK) and 224–279 (VAMN…KNKR). Residues 50–59 (TTRHKGGGHK) show a composition bias toward basic residues. Positions 253-268 (PEGRTRRPNKESDKLI) are enriched in basic and acidic residues. The segment covering 269–279 (VRRRRTGKNKR) has biased composition (basic residues).

Belongs to the universal ribosomal protein uL2 family. In terms of assembly, part of the 50S ribosomal subunit. Forms a bridge to the 30S subunit in the 70S ribosome.

Its function is as follows. One of the primary rRNA binding proteins. Required for association of the 30S and 50S subunits to form the 70S ribosome, for tRNA binding and peptide bond formation. It has been suggested to have peptidyltransferase activity; this is somewhat controversial. Makes several contacts with the 16S rRNA in the 70S ribosome. In Paenarthrobacter aurescens (strain TC1), this protein is Large ribosomal subunit protein uL2.